A 440-amino-acid polypeptide reads, in one-letter code: MCGVLRQLMLLLLAFLSITPSCSAWNFHHQLNGTTPSNGTTTNGSSSCPLANGASSNPLQVYTIAANNITASFIPYGARLISLMVPDREGKMQDVIVGYDNPQDYVKDTLTNHTYFGCIVGRYANRIRNGTFVLDGTTYNTPKNELNKTQTLHGGSVGYDQRNWTVTALSNSSITFTLFDSGYEHFPGDVINHVTFSVNSSYGLKRPNPQTEFTARTVSLSLTEKTPIMLSPHIYWNLNAFKNETVLEDTLLELPLSSRYVEVDSRLIPTGNIGNVSSSLNGTLDFTKGKLIGKDIKSADGICGANCTGYDNCFIIDRPNNASDWTSSPQTMVPAVNMSSITTGINMLVTTNQQAIQIYSCNGQNGTIPVKGSQVARNKASGDGNGTVVDKIEQYGCLVIETEGWIDGINNPDWGQDPFQIYSPESGPAINWATYVFTAS.

Residues 1–24 (MCGVLRQLMLLLLAFLSITPSCSA) form the signal peptide. Asparagine 32, asparagine 38, asparagine 43, asparagine 68, and asparagine 112 each carry an N-linked (GlcNAc...) asparagine glycan. Residue 125–126 (NR) participates in substrate binding. Asparagine 129, asparagine 147, asparagine 163, asparagine 171, and asparagine 199 each carry an N-linked (GlcNAc...) asparagine glycan. The Proton donor role is filled by histidine 233. N-linked (GlcNAc...) asparagine glycosylation is found at asparagine 243, asparagine 275, asparagine 281, and asparagine 306. Aspartate 311 contributes to the substrate binding site. 4 N-linked (GlcNAc...) asparagine glycosylation sites follow: asparagine 321, asparagine 337, asparagine 365, and asparagine 385. The active-site Proton acceptor is glutamate 401.

Belongs to the aldose epimerase family. Monomer.

Its subcellular location is the secreted. It carries out the reaction alpha-D-glucose = beta-D-glucose. Its pathway is carbohydrate metabolism; hexose metabolism. Mutarotase converts alpha-aldose to the beta-anomer. It is active on D-glucose, L-arabinose, D-xylose, D-galactose, maltose and lactose. The protein is Probable aldose 1-epimerase ARB_05372 of Arthroderma benhamiae (strain ATCC MYA-4681 / CBS 112371) (Trichophyton mentagrophytes).